Consider the following 384-residue polypeptide: Prokineticin receptor 2 (384 aa).

The Extracellular segment spans residues 1 to 54; it reads MAAQNGNTSFTPNFNPPQDHASSLSFNFSYGDYDLPMDEDEDMTKTRTFFAAKI. N-linked (GlcNAc...) asparagine glycans are attached at residues N7 and N27. A helical membrane pass occupies residues 55 to 75; sequence VIGIALAGIMLVCGIGNFVFI. Residues 76 to 89 lie on the Cytoplasmic side of the membrane; that stretch reads AALTRYKKLRNLTN. The chain crosses the membrane as a helical span at residues 90–110; it reads LLIANLAISDFLVAIICCPFE. At 111-136 the chain is on the extracellular side; it reads MDYYVVRQLSWEHGHVLCASVNYLRT. A disulfide bridge links C128 with C208. Residues 137 to 157 form a helical membrane-spanning segment; sequence VSLYVSTNALLAIAIDRYLAI. Over 158 to 171 the chain is Cytoplasmic; the sequence is VHPLKPRMNYQTAS. The helical transmembrane segment at 172–192 threads the bilayer; sequence FLIALVWMVSILIAIPSAYFA. The Extracellular segment spans residues 193–223; the sequence is TETVLFIVKSQEKIFCGQIWPVDQQLYYKSY. The helical transmembrane segment at 224-244 threads the bilayer; it reads FLFIFGVEFVGPVVTMTLCYA. Over 245–273 the chain is Cytoplasmic; that stretch reads RISRELWFKAVPGFQTEQIRKRLRCRRKT. The chain crosses the membrane as a helical span at residues 274-294; it reads VLVLMCILTAYVLCWAPFYGF. Residues 295–313 lie on the Extracellular side of the membrane; it reads TIVRDFFPTVFVKEKHYLT. The chain crosses the membrane as a helical span at residues 314–334; that stretch reads AFYVVECIAMSNSMINTVCFV. At 335–384 the chain is on the cytoplasmic side; that stretch reads TVKNNTMKYFKKMMLLHWRPSQRGSKSSADLDLRTNGVPTTEEVDCIRLK.

This sequence belongs to the G-protein coupled receptor 1 family. As to quaternary structure, homodimer. As to expression, expressed in the ileocecum, thyroid gland, pituitary gland, salivary gland, adrenal gland, testis, ovary and brain.

The protein localises to the cell membrane. Functionally, receptor for prokineticin 2. Exclusively coupled to the G(q) subclass of heteromeric G proteins. Activation leads to mobilization of calcium, stimulation of phosphoinositide turnover and activation of p44/p42 mitogen-activated protein kinase. The sequence is that of Prokineticin receptor 2 (PROKR2) from Homo sapiens (Human).